A 139-amino-acid chain; its full sequence is Mitochondrial intermembrane space import and assembly protein 40-A (139 aa).

3 disulfide bridges follow: C53-C55, C64-C97, and C74-C87. One can recognise a CHCH domain in the interval S61–Y105. 2 consecutive short sequence motifs (cx9C motif) follow at residues C64 to C74 and C87 to C97. The segment at D103 to S139 is disordered. Positions E115–E124 are enriched in basic and acidic residues.

In terms of assembly, monomer. Can form homooligomers.

It localises to the mitochondrion intermembrane space. Functionally, central component of a redox-sensitive mitochondrial intermembrane space import machinery which is required for the biogenesis of respiratory chain complexes. Functions as chaperone and catalyzes the formation of disulfide bonds in substrate proteins, such as COX17 or MICU1. Required for the import and folding of small cysteine-containing proteins (small Tim) in the mitochondrial intermembrane space (IMS). Precursor proteins to be imported into the IMS are translocated in their reduced form into the mitochondria. The polypeptide is Mitochondrial intermembrane space import and assembly protein 40-A (chchd4-a) (Xenopus laevis (African clawed frog)).